The sequence spans 300 residues: Transcription elongation factor A protein 2 (300 aa).

Positions 6-83 constitute a TFIIS N-terminal domain; the sequence is EEIARIARRL…KSWKKLLDAS (78 aa). Lys58 is covalently cross-linked (Glycyl lysine isopeptide (Lys-Gly) (interchain with G-Cter in ubiquitin)). Residues Ser60 and Ser101 each carry the phosphoserine modification. Positions 84-131 are disordered; sequence DAKARERRRGGSLPTSSSKEASEAQDPSRKRPELPRMPSTPRITTFPP. The span at 103–117 shows a compositional bias: basic and acidic residues; sequence EASEAQDPSRKRPEL. In terms of domain architecture, TFIIS central spans 139-255; it reads VRTKCREMLT…EHQMARTGGT (117 aa). The TFIIS-type zinc-finger motif lies at 258-298; sequence DLFTCGKCRKKNCTYTQVQTRSSDEPMTTFVVCNECGNRWK. 4 residues coordinate Zn(2+): Cys262, Cys265, Cys290, and Cys293.

It belongs to the TFS-II family. As to quaternary structure, interacts with the basal transcription factor GTF2B. Interacts with REXO1.

It localises to the nucleus. Necessary for efficient RNA polymerase II transcription elongation past template-encoded arresting sites. The arresting sites in DNA have the property of trapping a certain fraction of elongating RNA polymerases that pass through, resulting in locked ternary complexes. Cleavage of the nascent transcript by S-II allows the resumption of elongation from the new 3'-terminus. This chain is Transcription elongation factor A protein 2 (TCEA2), found in Bos taurus (Bovine).